A 91-amino-acid polypeptide reads, in one-letter code: Probable Fe(2+)-trafficking protein (91 aa).

It belongs to the Fe(2+)-trafficking protein family.

Could be a mediator in iron transactions between iron acquisition and iron-requiring processes, such as synthesis and/or repair of Fe-S clusters in biosynthetic enzymes. This is Probable Fe(2+)-trafficking protein from Acidobacterium capsulatum (strain ATCC 51196 / DSM 11244 / BCRC 80197 / JCM 7670 / NBRC 15755 / NCIMB 13165 / 161).